Consider the following 300-residue polypeptide: Merozoite surface protein 2 (300 aa).

The N-terminal stretch at methionine 1–isoleucine 20 is a signal peptide. Residues asparagine 22 and asparagine 36 are each glycosylated (N-linked (GlcNAc...) asparagine). The interval glutamate 44 to serine 226 is polymorphic region. The 1; inverted repeat unit spans residues glycine 51–alanine 58. A 7 X 8 AA tandem repeats of G-S-G-A-G-A-V-A region spans residues glycine 51–alanine 74. 5 consecutive repeat copies span residues glycine 61–alanine 68, glycine 69–alanine 76, glycine 77–alanine 84, glycine 85–alanine 92, and glycine 93–alanine 100. One copy of the 7; inverted repeat lies at glycine 103–alanine 110. A disordered region spans residues glycine 111–asparagine 261. Positions proline 124 to glutamate 148 are enriched in low complexity. The segment covering asparagine 149–valine 165 has biased composition (basic and acidic residues). Composition is skewed to polar residues over residues lysine 167–arginine 193 and lysine 200–proline 228. Asparagine 177 carries an N-linked (GlcNAc...) asparagine glycan. N-linked (GlcNAc...) asparagine glycosylation is present at asparagine 249. Cysteine 257 and cysteine 265 are joined by a disulfide. N-linked (GlcNAc...) asparagine glycans are attached at residues asparagine 273 and asparagine 274. The GPI-anchor amidated asparagine moiety is linked to residue asparagine 274. The propeptide at serine 275–isoleucine 300 is removed in mature form.

It localises to the cell membrane. May play a role in the merozoite attachment to the erythrocyte. The protein is Merozoite surface protein 2 of Plasmodium falciparum (isolate mad71 / Papua New Guinea).